We begin with the raw amino-acid sequence, 80 residues long: Exodeoxyribonuclease 7 small subunit (80 aa).

The protein belongs to the XseB family. Heterooligomer composed of large and small subunits.

The protein localises to the cytoplasm. The enzyme catalyses Exonucleolytic cleavage in either 5'- to 3'- or 3'- to 5'-direction to yield nucleoside 5'-phosphates.. Bidirectionally degrades single-stranded DNA into large acid-insoluble oligonucleotides, which are then degraded further into small acid-soluble oligonucleotides. The polypeptide is Exodeoxyribonuclease 7 small subunit (Rickettsia massiliae (strain Mtu5)).